The chain runs to 506 residues: Histidine ammonia-lyase (506 aa).

The 5-imidazolinone (Ala-Gly) cross-link spans 143-145 (ASG). Serine 144 carries the 2,3-didehydroalanine (Ser) modification.

The protein belongs to the PAL/histidase family. Contains an active site 4-methylidene-imidazol-5-one (MIO), which is formed autocatalytically by cyclization and dehydration of residues Ala-Ser-Gly.

It is found in the cytoplasm. It carries out the reaction L-histidine = trans-urocanate + NH4(+). It participates in amino-acid degradation; L-histidine degradation into L-glutamate; N-formimidoyl-L-glutamate from L-histidine: step 1/3. This Citrobacter koseri (strain ATCC BAA-895 / CDC 4225-83 / SGSC4696) protein is Histidine ammonia-lyase.